Here is a 381-residue protein sequence, read N- to C-terminus: Opsin Rh2 (381 aa).

The Extracellular segment spans residues 1–56 (MERSLLPEPPLAMALLGPRFEAQTGGNRSVLDNVLPDMAPLVNPYWSRFAPMDPTM). N-linked (GlcNAc...) asparagine glycosylation occurs at Asn-27. The chain crosses the membrane as a helical span at residues 57-81 (SKILGLFTLVILIISCCGNGVVVYI). The Cytoplasmic portion of the chain corresponds to 82–93 (FGGTKSLRTPAN). A helical transmembrane segment spans residues 94–119 (LLVLNLAFSDFCMMASQSPVMIINFY). Over 120–133 (YETWVLGPLWCDIY) the chain is Extracellular. Cys-130 and Cys-207 are joined by a disulfide. The helical transmembrane segment at 134–153 (AACGSLFGCVSIWSMCMIAF) threads the bilayer. Over 154-172 (DRYNVIVKGINGTPMTIKT) the chain is Cytoplasmic. Residues 173–196 (SIMKIAFIWMMAVFWTIMPLIGWS) traverse the membrane as a helical segment. At 197-220 (SYVPEGNLTACSIDYMTRQWNPRS) the chain is on the extracellular side. A helical transmembrane segment spans residues 221–248 (YLITYSLFVYYTPLFMICYSYWFIIATV). At 249-283 (AAHEKAMRDQAKKMNVKSLRSSEDCDKSAENKLAK) the chain is on the cytoplasmic side. Residues 284 to 307 (VALTTISLWFMAWTPYLIICYFGL) form a helical membrane-spanning segment. Topologically, residues 308–314 (FKIDGLT) are extracellular. Residues 315–339 (PLTTIWGATFAKTSAVYNPIVYGIS) form a helical membrane-spanning segment. Residue Lys-326 is modified to N6-(retinylidene)lysine. Residues 340–381 (HPKYRLVLKEKCPMCVCGSTDEPKPDAPPSDTETTSEAESKA) are Cytoplasmic-facing. Residues 358–381 (STDEPKPDAPPSDTETTSEAESKA) are disordered. The segment covering 370-381 (DTETTSEAESKA) has biased composition (polar residues).

The protein belongs to the G-protein coupled receptor 1 family. Opsin subfamily. Some or all of the Ser/Thr residues present in the C-terminal part may be phosphorylated.

The protein localises to the membrane. In terms of biological role, visual pigments are the light-absorbing molecules that mediate vision. They consist of an apoprotein, opsin, covalently linked to cis-retinal. This Drosophila pseudoobscura pseudoobscura (Fruit fly) protein is Opsin Rh2 (Rh2).